A 426-amino-acid polypeptide reads, in one-letter code: Arrestin domain-containing protein 17 (426 aa).

Residues glutamine 320–lysine 329 show a composition bias toward polar residues. The interval glutamine 320–aspartate 340 is disordered. Basic and acidic residues predominate over residues serine 331–aspartate 340.

Belongs to the arrestin family. As to quaternary structure, interacts with tax-6. Phosphorylated. Dephosphorylated by tax-6 in vitro. Expressed from the comma stage to adulthood in the nervous system, including sensory neurons and interneurons posterior to the nerve ring, dorsal and ventral nerve cords, tail ganglia and, CEP, HSN, ASK, ADL, ASH and ASJ neurons.

Involved in several behavioral responses including chemotaxis towards lysine and adaptation to repeated osmotic stress. In addition, plays a role in resuming egg-laying and locomotion after starvation. This is Arrestin domain-containing protein 17 from Caenorhabditis elegans.